The following is a 210-amino-acid chain: Ribosomal RNA small subunit methyltransferase G (210 aa).

Residues Gly-75, Phe-80, 98 to 100 (EST), 126 to 127 (AE), and Arg-141 contribute to the S-adenosyl-L-methionine site.

Belongs to the methyltransferase superfamily. RNA methyltransferase RsmG family.

It is found in the cytoplasm. In terms of biological role, specifically methylates the N7 position of a guanine in 16S rRNA. In Solibacter usitatus (strain Ellin6076), this protein is Ribosomal RNA small subunit methyltransferase G.